The following is a 26-amino-acid chain: PRKCH upstream open reading frame 2 (26 aa).

In terms of assembly, interacts with protein kinase C eta as well as other protein kinases including PRKCD, PRKCQ and PRKCE but not with PRKCG or PRKCZ; the interactions lead to inhibition of kinase activity.

Functionally, product of an upstream open reading frame (ORF) of PRKCH which regulates translation of the downstream protein kinase C eta (PKC-eta) ORF. Functions as a repressive element that maintains low basal levels of PKC-eta in growing cells but enhances its expression during stress conditions induced by amino acid starvation in a EIF2AK4/GCN2-dependent manner. In addition to its role in regulating PKC-eta translation, also inhibits the kinase activity of PKC-eta as well as other protein kinases including PRKCD, PRKCQ and PRKCE but not PRKCA, PRKCG or PRKCZ. The protein is PRKCH upstream open reading frame 2 of Homo sapiens (Human).